Reading from the N-terminus, the 312-residue chain is L-lactate dehydrogenase (312 aa).

The NAD(+) site is built by Val14, Asp35, and Tyr66. Residues Gln83, Arg90, and 122-125 (NPVD) contribute to the substrate site. Residues 120–122 (ASN) and Ser145 contribute to the NAD(+) site. 150-153 (DSAR) lines the substrate pocket. Residue His177 is the Proton acceptor of the active site. A Phosphotyrosine modification is found at Tyr220. A substrate-binding site is contributed by Thr229.

This sequence belongs to the LDH/MDH superfamily. LDH family. Homotetramer.

The protein localises to the cytoplasm. The catalysed reaction is (S)-lactate + NAD(+) = pyruvate + NADH + H(+). It participates in fermentation; pyruvate fermentation to lactate; (S)-lactate from pyruvate: step 1/1. Its function is as follows. Catalyzes the conversion of lactate to pyruvate. The protein is L-lactate dehydrogenase of Mycoplasma pneumoniae (strain ATCC 29342 / M129 / Subtype 1) (Mycoplasmoides pneumoniae).